The following is a 230-amino-acid chain: Ubiquitin carboxyl-terminal hydrolase isozyme L3 (230 aa).

In terms of domain architecture, UCH catalytic spans 5–229 (RWLPLEANPE…LRFNAIALSA (225 aa)). The interval 8 to 13 (PLEANP) is interaction with ubiquitin. Catalysis depends on Cys-95, which acts as the Nucleophile. Position 130 is a phosphoserine (Ser-130). The segment at 152 to 159 (AHEGQTEA) is interaction with ubiquitin. Crossover loop which restricts access of large ubiquitin adducts to the active site. Catalysis depends on His-169, which acts as the Proton donor. An interaction with ubiquitin region spans residues 219–224 (ELRFNA).

The protein belongs to the peptidase C12 family. Preferentially binds diubiquitin; the interaction does not hydrolyze diubiquitin but, in vitro, inhibits the hydrolyzing activity on other substrates.

The protein resides in the cytoplasm. The catalysed reaction is Thiol-dependent hydrolysis of ester, thioester, amide, peptide and isopeptide bonds formed by the C-terminal Gly of ubiquitin (a 76-residue protein attached to proteins as an intracellular targeting signal).. Its activity is regulated as follows. Inhibited by monoubiquitin and diubiquitin. Its function is as follows. Deubiquitinating enzyme (DUB) that controls levels of cellular ubiquitin through processing of ubiquitin precursors and ubiquitinated proteins. Thiol protease that recognizes and hydrolyzes a peptide bond at the C-terminal glycine of either ubiquitin or NEDD8. Has a 10-fold preference for Arg and Lys at position P3, and exhibits a preference towards 'Lys-48'-linked ubiquitin chains. Deubiquitinates ENAC in apical compartments, thereby regulating apical membrane recycling. Indirectly increases the phosphorylation of IGFIR, AKT and FOXO1 and promotes insulin-signaling and insulin-induced adipogenesis. Required for stress-response retinal, skeletal muscle and germ cell maintenance. May be involved in working memory. Can hydrolyze UBB(+1), a mutated form of ubiquitin which is not effectively degraded by the proteasome. The chain is Ubiquitin carboxyl-terminal hydrolase isozyme L3 (UCHL3) from Sus scrofa (Pig).